A 152-amino-acid chain; its full sequence is Proteolipid protein 2 (152 aa).

Positions 19–138 constitute an MARVEL domain; it reads FSRTKKGILL…DAYITFPLKQ (120 aa). Transmembrane regions (helical) follow at residues 25-45, 48-68, 85-105, and 112-132; these read GILLFAEIILCLVILICFSAS, SAYSSLSVIEMICAAVLLVFY, DFFRSLIATILYLITSIVVLV, and RVVAGILGLLATLLFGYDAYI.

Its subcellular location is the membrane. May play a role in cell differentiation in the intestinal epithelium. This Mus musculus (Mouse) protein is Proteolipid protein 2 (Plp2).